The primary structure comprises 121 residues: Small ribosomal subunit protein uS13 (121 aa).

Positions 91 to 121 are disordered; that stretch reads HRRGLPVRGQKTKNNARTRKGPVKTVANKKK.

It belongs to the universal ribosomal protein uS13 family. As to quaternary structure, part of the 30S ribosomal subunit. Forms a loose heterodimer with protein S19. Forms two bridges to the 50S subunit in the 70S ribosome.

In terms of biological role, located at the top of the head of the 30S subunit, it contacts several helices of the 16S rRNA. In the 70S ribosome it contacts the 23S rRNA (bridge B1a) and protein L5 of the 50S subunit (bridge B1b), connecting the 2 subunits; these bridges are implicated in subunit movement. Contacts the tRNAs in the A and P-sites. This is Small ribosomal subunit protein uS13 from Staphylococcus carnosus (strain TM300).